We begin with the raw amino-acid sequence, 1279 residues long: MAIVKRGGRTRAKQQQAPAKVNNGLGAGAGAGGGIQKAEFDITKKKEVGVSDLTLLSKITDEAINENLHKRFMNDTIYTYIGHVLISVNPFRDLGIYTLENLNKYKGRNRLEVPPHVFAIAESMYYHLKSYGENQCVIISGESGAGKTEAAKQIMQYIANVSVDSGNAEISKIKDMVLATNPLLESFGCAKTLRNNNSSRHGKYLEIKFSEGSYQPIAAHITNYLLEKQRVVSQITNERNFHIFYQFTKHCPPQYQQQFGIQGPETYVYTSAAKCITVDGIDDGKDFKDTLNAMNIIGLSQAEQDNIFRILALILWTGNISFVEDESGNAAIRDDSVTNFVAYLLDVNAEILKKAITERTIETSHGMKRGSTYHVPLNIVQATAVRDALAKGLYNNLFDWIVERVNLSLQGNQGQSEKSIGILDIYGFEIFEHNSFEQICINYVNEKLQQIFIQLTLKAEQDEYVQEQIKWTPIDYFNNKVVCDLIEATRPQPGLFAALNDSIKTAHADSDAADQVFAQRLSMVGASNRHFEDRRGKFIIKHYAGDVTYDVAGMTDKNKDAMLRDLLELLGTSSNAFVTQTLFPPNLLSELVDSKKRPETASDKIKKSANILVDTLSQATPSYIRTIKPNQTKKPRDYDNQQVLHQIKYLGLKENVRIRRAGFAYRSTFQRFVQRFYLLSPATGYAGDYIWQGDDLTAVKEILRACHIPTSEYQLGTTKVFIKTPETLFALEDMRDKYWHNMAARIQRAWRRYIKRKEDAAKTIQRAWRMKNHGNQFEQFRDYGNSLLQGRKERRRFSMLGSRAYMGDYLACNDKTGFGRFVVNQVGIKEPVVFSAKGVILLSKFGRSSKRFPRIFVLTKSNLYIIAEVLVEKRLQLQREFALPVHLIKSVGLSQLQDNWVAVCLLSPTTTTPDVFINLDFKTELVAQLKKLNSGLSILIGPTVQYQKKPGKYQTVKFAIGSGPHIPPLIDSYKSGTVTVNQGLPPTSKNPKRPRAKLGKVDYSKYYNRGVRSLAQPAFQSQPTASYRSEPAYPQPTTQLYATQHQPQQPQVPTRTASRKAPPPAPSTQTAAQVSTLPQAARKPAAPARPAKKIAPQPPVKKAVSPQPPAKKTVAAPPPPPPPPALSKPKHPTYRAMYDYDGSVAGSVPLVKDTIYYVLQINGKWGLVKTMDETQEGWSPIDYLQEESSPSASAATQSYAPTTASSNPVSTASSNTYTNTTQATTMLNGSLGNGLADALKAKKSEETTLAGSLADALKKRQGVTRDDSDAEDDDDDDDW.

Residues 1-12 (MAIVKRGGRTRA) show a composition bias toward basic residues. Positions 1–25 (MAIVKRGGRTRAKQQQAPAKVNNGL) are disordered. A Myosin motor domain is found at 48–736 (VGVSDLTLLS…TLFALEDMRD (689 aa)). 141 to 148 (GESGAGKT) provides a ligand contact to ATP. Phosphoserine is present on S371. The actin-binding stretch occupies residues 419–502 (SIGILDIYGF…PGLFAALNDS (84 aa)). 2 IQ domains span residues 740–760 (HNMA…KEDA) and 761–786 (AKTI…YGNS). The TH1 domain occupies 794–984 (RRRFSMLGSR…SGTVTVNQGL (191 aa)). Polar residues-rich tracts occupy residues 980 to 989 (VNQGLPPTSK) and 1018 to 1027 (AFQSQPTASY). Disordered regions lie at residues 980–1001 (VNQG…LGKV), 1014–1132 (LAQP…PKHP), 1189–1216 (SPSA…SSNT), and 1253–1279 (LADA…DDDW). Low complexity-rich tracts occupy residues 1038–1056 (TQLY…PTRT) and 1067–1095 (STQT…KKIA). Over residues 1116 to 1126 (APPPPPPPPAL) the composition is skewed to pro residues. The region spanning 1129–1189 (PKHPTYRAMY…PIDYLQEESS (61 aa)) is the SH3 domain. Residues 1189-1209 (SPSASAATQSYAPTTASSNPV) are compositionally biased toward polar residues. The span at 1268–1279 (SDAEDDDDDDDW) shows a compositional bias: acidic residues.

It belongs to the TRAFAC class myosin-kinesin ATPase superfamily. Myosin family. In terms of processing, phosphorylation of the TEDS site (Ser-371) is required for the polarization of the actin cytoskeleton. Phosphorylation probably activates the myosin-I ATPase activity.

It localises to the cytoplasm. It is found in the cytoskeleton. The protein localises to the actin patch. In terms of biological role, type-I myosin implicated in the organization of the actin cytoskeleton. Required for proper actin cytoskeleton polarization. At the cell cortex, assembles in patch-like structures together with proteins from the actin-polymerizing machinery and promotes actin assembly. Functions as actin nucleation-promoting factor (NPF) for the Arp2/3 complex. This is Myosin-1 (MYO1) from Lodderomyces elongisporus (strain ATCC 11503 / CBS 2605 / JCM 1781 / NBRC 1676 / NRRL YB-4239) (Yeast).